The following is a 727-amino-acid chain: Elongation factor 2 (727 aa).

A tr-type G domain is found at 19–260; it reads DQIRNMGICA…MAITHLPNPL (242 aa). GTP-binding positions include 28–35, 94–98, and 148–151; these read AHIDHGKT, DTPGH, and NKVD. Diphthamide is present on histidine 603.

Belongs to the TRAFAC class translation factor GTPase superfamily. Classic translation factor GTPase family. EF-G/EF-2 subfamily.

The protein localises to the cytoplasm. Its function is as follows. Catalyzes the GTP-dependent ribosomal translocation step during translation elongation. During this step, the ribosome changes from the pre-translocational (PRE) to the post-translocational (POST) state as the newly formed A-site-bound peptidyl-tRNA and P-site-bound deacylated tRNA move to the P and E sites, respectively. Catalyzes the coordinated movement of the two tRNA molecules, the mRNA and conformational changes in the ribosome. In Methanococcus maripaludis (strain C6 / ATCC BAA-1332), this protein is Elongation factor 2.